We begin with the raw amino-acid sequence, 299 residues long: ATP phosphoribosyltransferase (299 aa).

The protein belongs to the ATP phosphoribosyltransferase family. Long subfamily. It depends on Mg(2+) as a cofactor.

It is found in the cytoplasm. It catalyses the reaction 1-(5-phospho-beta-D-ribosyl)-ATP + diphosphate = 5-phospho-alpha-D-ribose 1-diphosphate + ATP. The protein operates within amino-acid biosynthesis; L-histidine biosynthesis; L-histidine from 5-phospho-alpha-D-ribose 1-diphosphate: step 1/9. Its activity is regulated as follows. Feedback inhibited by histidine. Its function is as follows. Catalyzes the condensation of ATP and 5-phosphoribose 1-diphosphate to form N'-(5'-phosphoribosyl)-ATP (PR-ATP). Has a crucial role in the pathway because the rate of histidine biosynthesis seems to be controlled primarily by regulation of HisG enzymatic activity. The protein is ATP phosphoribosyltransferase of Shewanella baltica (strain OS155 / ATCC BAA-1091).